A 123-amino-acid polypeptide reads, in one-letter code: uncharacterized protein (123 aa).

The segment covering 31–57 (KLRTEAKKSKDKERTKEKEKHESLAKE) has biased composition (basic and acidic residues). The interval 31–58 (KLRTEAKKSKDKERTKEKEKHESLAKEK) is disordered. Residues 91 to 111 (IIIFLLILLVSGLMVGIFFGI) traverse the membrane as a helical segment.

The protein resides in the membrane. This is an uncharacterized protein from Mycoplasma genitalium (strain ATCC 33530 / DSM 19775 / NCTC 10195 / G37) (Mycoplasmoides genitalium).